Reading from the N-terminus, the 652-residue chain is Phosphatidylinositol-binding clathrin assembly protein (652 aa).

Serine 2 carries the N-acetylserine modification. The region spanning 14–145 (QHSVTGSAVS…VSYRQVAFDF (132 aa)) is the ENTH domain. Serine 16 and serine 20 each carry phosphoserine. Residues 221–294 (KYFDMKKNQC…LEGKKIKDST (74 aa)) are interaction with PIMREG. Lysine 238 participates in a covalent cross-link: Glycyl lysine isopeptide (Lys-Gly) (interchain with G-Cter in SUMO2). Phosphoserine occurs at positions 303 and 315. A disordered region spans residues 559–580 (KNDVNWSQPGEKKLTGGSNWQP).

Belongs to the PICALM/SNAP91 family. In terms of assembly, binds to clathrin; involves primarily the C-terminal sequences, but the full-length protein is required for full binding capacity. Binds phosphatidylinositol 4,5- bisphosphate. Interacts with PIMREG; this interaction may change the subcellular location into the nucleus. Interacts with AP2A1 (via its alpha-appendage domain). Interacts (via N-terminus) with VAMP2; VAMP3; VAMP7 and VAMP8 (Via N-terminus). Interacts with LC3/MAP1LC3A. In terms of tissue distribution, expressed in all tissues examined.

The protein resides in the cell membrane. It localises to the membrane. It is found in the clathrin-coated pit. Its subcellular location is the golgi apparatus. The protein localises to the cytoplasmic vesicle. The protein resides in the clathrin-coated vesicle. It localises to the nucleus. In terms of biological role, cytoplasmic adapter protein that plays a critical role in clathrin-mediated endocytosis which is important in processes such as internalization of cell receptors, synaptic transmission or removal of apoptotic cells. Recruits AP-2 and attaches clathrin triskelions to the cytoplasmic side of plasma membrane leading to clathrin-coated vesicles (CCVs) assembly. Furthermore, regulates clathrin-coated vesicle size and maturation by directly sensing and driving membrane curvature. In addition to binding to clathrin, mediates the endocytosis of small R-SNARES (Soluble NSF Attachment Protein REceptors) between plasma membranes and endosomes including VAMP2, VAMP3, VAMP4, VAMP7 or VAMP8. In turn, PICALM-dependent SNARE endocytosis is required for the formation and maturation of autophagic precursors. Modulates thereby autophagy and the turnover of autophagy substrates such as MAPT/TAU or amyloid precursor protein cleaved C-terminal fragment (APP-CTF). The chain is Phosphatidylinositol-binding clathrin assembly protein (PICALM) from Homo sapiens (Human).